Consider the following 433-residue polypeptide: Probable mannose-6-phosphate isomerase (433 aa).

4 residues coordinate Zn(2+): Gln-103, His-105, Glu-130, and His-277. Arg-296 is an active-site residue.

This sequence belongs to the mannose-6-phosphate isomerase type 1 family. It depends on Zn(2+) as a cofactor.

The protein resides in the cytoplasm. The enzyme catalyses D-mannose 6-phosphate = D-fructose 6-phosphate. It functions in the pathway nucleotide-sugar biosynthesis; GDP-alpha-D-mannose biosynthesis; alpha-D-mannose 1-phosphate from D-fructose 6-phosphate: step 1/2. Involved in the synthesis of the GDP-mannose and dolichol-phosphate-mannose required for a number of critical mannosyl transfer reactions. This chain is Probable mannose-6-phosphate isomerase (PMIH), found in Echinococcus multilocularis (Fox tapeworm).